A 317-amino-acid polypeptide reads, in one-letter code: Methyltransferase CPUR_05424 (317 aa).

Positions 57–149 (DVGAGNGPYA…QLRPGGTFAC (93 aa)) are methyltransferase domain.

The protein belongs to the methyltransferase superfamily.

The protein operates within pigment biosynthesis. Functionally, methyltransferase; part of the ergochrome gene cluster responsible for the typical purple-black color of the ergot sclerotia. The ergochrome gene cluster produces several ergot pigments including the yellow ergochrome secalonic acid and its derivatives, as well as the red anthraquinones endocrocin and clavorubin. The pathway begins with the synthesis of atrochrysone thioester by the polyketide synthase (PKS) CPUR_05437. The atrochrysone carboxyl ACP thioesterase CPUR_05436 then breaks the thioester bond and releases the atrochrysone carboxylic acid from CPUR_05437. The atrochrysone carboxylic acid is then converted to atrochrysone which is further transformed into emodin anthrone. The next step is performed by the anthrone oxygenase CPUR_05434 that catalyzes the oxidation of emodinanthrone to emodin. Emodin is further modified to yield monodictyphenone via several steps involving CPUR_05427, CPUR_05428, CPUR_05429 and CPUR_05430. The short chain dehydrogenase/reductase CPUR_05418 then catalyzes the C-5 ketoreduction to give the xanthone skeleton of the monomeric units. Ergochromes formation requires further dimerization steps of different xanthone units, probably catalyzed by the cytochrome P450 monooxygenase CPUR_05419. CPUR_05425, CPUR_05426 and CPUR_05431 are unique to Claviceps, thus it is likely that they are involved in further modification of xanthone units or in their dimerization. The yellow ergochromes and the red anthraquinone pigments endocrocin and clavorubin are products from the same PKS derived precursors and the latter are likely shunt products in the pathway of xanthone biosynthesis. It is proposed that atrochrysone carboxylic acid released from the PKS CPUR_05437 can also be converted to endocrocin anthrone which is further oxidized into endocrocin by CPUR_05435. Endocrocin could be then modified to clavorubin, possibly by CPUR_05423 and CPUR_05431. Clavorubin is the principal anthraquinone metabolite produced by the cluster with a much higher yield compared to endocrocin. This chain is Methyltransferase CPUR_05424, found in Claviceps purpurea (strain 20.1) (Ergot fungus).